The chain runs to 111 residues: Universal stress protein B (111 aa).

2 helical membrane-spanning segments follow: residues 1–21 (MISTVALFWGLCVVCIINMAR) and 90–110 (FILTSALCGLVVISLIALLIW).

The protein belongs to the universal stress protein B family.

It localises to the cell inner membrane. This chain is Universal stress protein B, found in Escherichia fergusonii (strain ATCC 35469 / DSM 13698 / CCUG 18766 / IAM 14443 / JCM 21226 / LMG 7866 / NBRC 102419 / NCTC 12128 / CDC 0568-73).